Consider the following 477-residue polypeptide: P3 protein (477 aa).

The disordered stretch occupies residues 1–21 (MVLMQDKGSSQQWPGLGGEGG). The next 8 helical transmembrane spans lie at 225 to 245 (PMLL…FLMA), 253 to 273 (ALAL…SYLF), 281 to 301 (VTLA…FLPL), 320 to 340 (ISKI…GVLI), 361 to 381 (VLLL…LAGI), 383 to 403 (LPIV…GYCL), 417 to 437 (VSIE…QLSL), and 450 to 470 (FIVA…HFIY).

Belongs to the bile acid:sodium symporter (BASS) (TC 2.A.28) family.

The protein resides in the membrane. Its function is as follows. The ubiquitous expression and the conservation of the sequence in distant animal species suggest that the gene codes for a protein with housekeeping functions. The chain is P3 protein (SLC10A3) from Homo sapiens (Human).